Consider the following 216-residue polypeptide: MRLRRKAWARPELESDPKVIYNPMHYKENWQEAFGNNHPVHLELGCGRGQFINQCAELNPHINYIAIDLYDEVLVKALRKINEKALHNVRVIPMNIAKLESIFKHDQIEKIYINFCNPWPSRRHHHKRLTHPQFLSVYKKLMKDHSEIWFKTDDDELFKDSLKYFAEAGFIEKYRTFDLHQSEFTENIKTEYEEKFSNQGVKIKFGIFVVNKGRQN.

Residues Glu43, Asp68, Asn95, and Asn117 each contribute to the S-adenosyl-L-methionine site. Substrate contacts are provided by residues Asp153 and 190-193; that span reads TEYE.

This sequence belongs to the class I-like SAM-binding methyltransferase superfamily. TrmB family.

It catalyses the reaction guanosine(46) in tRNA + S-adenosyl-L-methionine = N(7)-methylguanosine(46) in tRNA + S-adenosyl-L-homocysteine. Its pathway is tRNA modification; N(7)-methylguanine-tRNA biosynthesis. Its function is as follows. Catalyzes the formation of N(7)-methylguanine at position 46 (m7G46) in tRNA. This is tRNA (guanine-N(7)-)-methyltransferase from Desulfitobacterium hafniense (strain Y51).